Consider the following 1079-residue polypeptide: DNA-directed RNA polymerase subunit beta (1079 aa).

The segment at Arg-963–Arg-982 is disordered. Positions Gly-966–Pro-975 are enriched in polar residues.

Belongs to the RNA polymerase beta chain family. As to quaternary structure, in plastids the minimal PEP RNA polymerase catalytic core is composed of four subunits: alpha, beta, beta', and beta''. When a (nuclear-encoded) sigma factor is associated with the core the holoenzyme is formed, which can initiate transcription.

It is found in the plastid. The protein resides in the chloroplast. It carries out the reaction RNA(n) + a ribonucleoside 5'-triphosphate = RNA(n+1) + diphosphate. Its function is as follows. DNA-dependent RNA polymerase catalyzes the transcription of DNA into RNA using the four ribonucleoside triphosphates as substrates. This chain is DNA-directed RNA polymerase subunit beta, found in Pelargonium hortorum (Common geranium).